A 629-amino-acid polypeptide reads, in one-letter code: Transferrin (629 aa).

Residues 1–21 (MTIKNVLKLAALLGVLALVQA) form the signal peptide. Transferrin-like domains follow at residues 26–366 (YRMC…ERDG) and 372–621 (MKMC…GLKC). 2 disulfide bridges follow: cysteine 29–cysteine 63 and cysteine 38–cysteine 54. Position 111 (tyrosine 111) interacts with Fe(3+). 6 disulfide bridges follow: cysteine 135/cysteine 231, cysteine 184/cysteine 210, cysteine 207/cysteine 216, cysteine 270/cysteine 283, cysteine 375/cysteine 409, and cysteine 385/cysteine 403. Hydrogencarbonate-binding residues include threonine 137, arginine 141, valine 143, and glycine 144. Tyrosine 225 contributes to the Fe(3+) binding site. 2 residues coordinate Fe(3+): aspartate 408 and histidine 561.

Belongs to the transferrin family. Monomer.

In terms of biological role, transferrins are iron binding transport proteins which bind Fe(3+) ion in association with the binding of an anion, usually bicarbonate. This transferrin binds only one Fe(3+) ion per protein molecule. Transports iron ions from the hemolymph into the eggs during the vitellogenic stage (oogenesis). The chain is Transferrin from Sarcophaga peregrina (Flesh fly).